We begin with the raw amino-acid sequence, 196 residues long: Alpha-crystallin A chain (196 aa).

An N-acetylmethionine modification is found at Met1. Residues Met1–Glu63 form a required for complex formation with BFSP1 and BFSP2 region. Position 6 is a deamidated glutamine; partial (Gln6). Ser45 is modified (phosphoserine). A Deamidated glutamine; partial modification is found at Gln50. Residues His76–Ser185 form the sHSP domain. N6-acetyllysine is present on residues Lys93 and Lys122. His123 contributes to the Zn(2+) binding site. Asn124 carries the deamidated asparagine; partial modification. Zn(2+) is bound by residues Glu125 and His130. Ser145 is subject to Phosphoserine. Residue Asn146 is modified to Deamidated asparagine; partial. Positions Lys168–Ser196 are disordered. Gln170 bears the Deamidated glutamine; partial mark. The segment covering Gly176–Pro190 has biased composition (basic and acidic residues). His177 serves as a coordination point for Zn(2+). O-linked (GlcNAc) serine glycosylation is present at Ser185.

The protein belongs to the small heat shock protein (HSP20) family. Heteropolymer composed of three CRYAA and one CRYAB subunits. Inter-subunit bridging via zinc ions enhances stability, which is crucial as there is no protein turn over in the lens. Can also form homodimers and homotetramers (dimers of dimers) which serve as the building blocks of homooligomers. Within homooligomers, the zinc-binding motif is created from residues of 3 different molecules. His-123 and Glu-125 from one molecule are ligands of the zinc ion, and His-130 and His-177 residues from additional molecules complete the site with tetrahedral coordination geometry. Part of a complex required for lens intermediate filament formation composed of BFSP1, BFSP2 and CRYAA. Acetylation at Lys-93 may increase chaperone activity. Post-translationally, undergoes age-dependent proteolytical cleavage at the C-terminus.

The protein resides in the cytoplasm. Its subcellular location is the nucleus. Functionally, contributes to the transparency and refractive index of the lens. Acts as a chaperone, preventing aggregation of various proteins under a wide range of stress conditions. Required for the correct formation of lens intermediate filaments as part of a complex composed of BFSP1, BFSP2 and CRYAA. In Mus musculus (Mouse), this protein is Alpha-crystallin A chain (Cryaa).